The chain runs to 560 residues: Vanillyl-alcohol oxidase (560 aa).

One can recognise an FAD-binding PCMH-type domain in the interval 67 to 272; the sequence is DYFLASAIVA…TKIGIWLMPN (206 aa). Residue Tyr108 is part of the active site. The residue at position 422 (His422) is a Tele-8alpha-FAD histidine. Active-site residues include Tyr503 and Arg504.

The protein to bacterial flavocytochrome p-cresol methyl hydroxylase. Homooctamer (tetramer of tightly interacting dimers). FAD is required as a cofactor.

It localises to the peroxisome. It is found in the cytoplasm. It catalyses the reaction 4-hydroxy-3-methoxy-benzenemethanol + O2 = vanillin + H2O2. Its activity is regulated as follows. Competitively inhibited by cinnamyl and coniferyl alcohols and by isoeugenol. Catalyzes the conversion of vanillin alcohol to vanillin, and also the conversion of a wide range of phenolic compounds bearing side chains of variable size at the para position of the aromatic ring. Crucial for the degradation of the secondary metabolites derived from the degradation of the lignin. Catalyzes besides the oxidation of 4-hydroxybenzyl alcohols, the oxidative deamination of 4-hydroxybenzylamines, the oxidative demethylation of 4-(methoxy-methyl)phenols and the oxidative hydration of 4-allylphenols. Most active with 4-allylphenols. The sequence is that of Vanillyl-alcohol oxidase (VAOA) from Penicillium simplicissimum.